The primary structure comprises 447 residues: Na(+)-translocating NADH-quinone reductase subunit A (447 aa).

Belongs to the NqrA family. In terms of assembly, composed of six subunits; NqrA, NqrB, NqrC, NqrD, NqrE and NqrF.

It catalyses the reaction a ubiquinone + n Na(+)(in) + NADH + H(+) = a ubiquinol + n Na(+)(out) + NAD(+). Functionally, NQR complex catalyzes the reduction of ubiquinone-1 to ubiquinol by two successive reactions, coupled with the transport of Na(+) ions from the cytoplasm to the periplasm. NqrA to NqrE are probably involved in the second step, the conversion of ubisemiquinone to ubiquinol. The protein is Na(+)-translocating NADH-quinone reductase subunit A of Yersinia pseudotuberculosis serotype O:1b (strain IP 31758).